A 971-amino-acid chain; its full sequence is UPF0182 protein RER_22310 (971 aa).

7 consecutive transmembrane segments (helical) span residues 16-36 (ILLV…RLIG), 61-81 (FVLF…AMLL), 112-132 (LFGV…AQAN), 172-192 (WLFV…YVFG), 209-229 (VQLA…YWFD), 257-277 (AKLI…ASIF), and 286-306 (MAVA…PMIV). The disordered stretch occupies residues 890–927 (GSAATVTQPAPDPDTGAQPETPTTPTAPAPPASSDDVT).

Belongs to the UPF0182 family.

It localises to the cell membrane. The polypeptide is UPF0182 protein RER_22310 (Rhodococcus erythropolis (strain PR4 / NBRC 100887)).